The chain runs to 256 residues: Peroxisomal membrane protein PMP30A (256 aa).

It belongs to the peroxin-11 family.

It localises to the peroxisome membrane. Functionally, involved in peroxisomal proliferation. Could participate in peroxisomal elongation or fission. May be involved in parceling of peroxisomes into regular quanta. This chain is Peroxisomal membrane protein PMP30A (PEX11A), found in Candida boidinii (Yeast).